A 261-amino-acid polypeptide reads, in one-letter code: Cytochrome c oxidase subunit 3 (261 aa).

Topologically, residues 1 to 15 (MTHQTHAYHMVNPSP) are mitochondrial matrix. A helical membrane pass occupies residues 16 to 34 (WPLTGALSALLMSSGLTMW). Over 35–40 (FHFNSL) the chain is Mitochondrial intermembrane. Residues 41 to 66 (ILLTTGLVTNILTMYQWWRDVIREST) form a helical membrane-spanning segment. Over 67–72 (FQGHHT) the chain is Mitochondrial matrix. Residues 73 to 105 (PVVQKGLRYGMVLFIISEVLFFTGFFWAFYHSS) traverse the membrane as a helical segment. Residues 106 to 128 (LAPTPELGGCWPPTGINPLNPLE) lie on the Mitochondrial intermembrane side of the membrane. The chain crosses the membrane as a helical span at residues 129-152 (VPLLNTSVLLASGVSITWAHHSLM). Residues 153-155 (EGN) lie on the Mitochondrial matrix side of the membrane. A helical transmembrane segment spans residues 156 to 183 (RKQMLQALFITIALGVYFTLLQASEYHE). Residues 184–190 (ASFTISD) lie on the Mitochondrial intermembrane side of the membrane. Residues 191 to 223 (GVYGSTFFVATGFHGLHVIIGSTFLIVCFLRQL) traverse the membrane as a helical segment. Residues 224–232 (KFHFTSDHH) are Mitochondrial matrix-facing. Residues 233–256 (FGFEAAAWYWHFVDVVWLFLYVSI) form a helical membrane-spanning segment. The Mitochondrial intermembrane segment spans residues 257–261 (YWWGS).

It belongs to the cytochrome c oxidase subunit 3 family. Component of the cytochrome c oxidase (complex IV, CIV), a multisubunit enzyme composed of 14 subunits. The complex is composed of a catalytic core of 3 subunits MT-CO1, MT-CO2 and MT-CO3, encoded in the mitochondrial DNA, and 11 supernumerary subunits COX4I, COX5A, COX5B, COX6A, COX6B, COX6C, COX7A, COX7B, COX7C, COX8 and NDUFA4, which are encoded in the nuclear genome. The complex exists as a monomer or a dimer and forms supercomplexes (SCs) in the inner mitochondrial membrane with NADH-ubiquinone oxidoreductase (complex I, CI) and ubiquinol-cytochrome c oxidoreductase (cytochrome b-c1 complex, complex III, CIII), resulting in different assemblies (supercomplex SCI(1)III(2)IV(1) and megacomplex MCI(2)III(2)IV(2)).

It is found in the mitochondrion inner membrane. It carries out the reaction 4 Fe(II)-[cytochrome c] + O2 + 8 H(+)(in) = 4 Fe(III)-[cytochrome c] + 2 H2O + 4 H(+)(out). In terms of biological role, component of the cytochrome c oxidase, the last enzyme in the mitochondrial electron transport chain which drives oxidative phosphorylation. The respiratory chain contains 3 multisubunit complexes succinate dehydrogenase (complex II, CII), ubiquinol-cytochrome c oxidoreductase (cytochrome b-c1 complex, complex III, CIII) and cytochrome c oxidase (complex IV, CIV), that cooperate to transfer electrons derived from NADH and succinate to molecular oxygen, creating an electrochemical gradient over the inner membrane that drives transmembrane transport and the ATP synthase. Cytochrome c oxidase is the component of the respiratory chain that catalyzes the reduction of oxygen to water. Electrons originating from reduced cytochrome c in the intermembrane space (IMS) are transferred via the dinuclear copper A center (CU(A)) of subunit 2 and heme A of subunit 1 to the active site in subunit 1, a binuclear center (BNC) formed by heme A3 and copper B (CU(B)). The BNC reduces molecular oxygen to 2 water molecules using 4 electrons from cytochrome c in the IMS and 4 protons from the mitochondrial matrix. This Hippopotamus amphibius (Hippopotamus) protein is Cytochrome c oxidase subunit 3 (MT-CO3).